The primary structure comprises 582 residues: Pescadillo homolog (582 aa).

Positions 277-329 (LSALSASLARVVATVEEEENQLDNFPTEEEDQENMQAREKEQKEQEAQKRLFE) form a coiled coil. The segment covering 294–309 (EENQLDNFPTEEEDQE) has biased composition (acidic residues). The segment at 294–317 (EENQLDNFPTEEEDQENMQAREKE) is disordered. One can recognise a BRCT domain in the interval 323 to 416 (AQKRLFEGLK…MRLPVEDYFL (94 aa)). Positions 445–454 (ALQRGEKPVQ) are enriched in basic and acidic residues. 2 disordered regions span residues 445-511 (ALQR…ETGS) and 554-582 (REVNKLTAKRKAHEDASKAQKKQKKAKKQ). Positions 455 to 477 (EEDEEEEDEDEEEDDDVDDEEFT) are enriched in acidic residues. Over residues 478–490 (EEKNLKKMEDTRA) the composition is skewed to basic and acidic residues. Positions 517-582 (RLEQEEKAEE…QKKQKKAKKQ (66 aa)) form a coiled coil. Positions 572–582 (AQKKQKKAKKQ) are enriched in basic residues.

Belongs to the pescadillo family. As to quaternary structure, component of the PeBoW complex, composed of bop1, pes1 and wdr12. The complex is held together by bop1, which interacts with pes1 via its N-terminal domain and with wdr12 via a high-affinity interaction between the seven-bladed beta-propeller domains of the 2 proteins. The PeBoW complex associates with the 66S pre-ribosome.

It is found in the nucleus. It localises to the nucleolus. The protein resides in the nucleoplasm. In terms of biological role, component of the PeBoW complex, which is required for maturation of 28S and 5.8S ribosomal RNAs and formation of the 60S ribosome. This chain is Pescadillo homolog (pes1), found in Salmo salar (Atlantic salmon).